The primary structure comprises 456 residues: tRNA modification GTPase MnmE (456 aa).

Positions 24, 81, and 120 each coordinate (6S)-5-formyl-5,6,7,8-tetrahydrofolate. Residues glycine 216–glycine 379 enclose the TrmE-type G domain. Asparagine 226 is a K(+) binding site. GTP is bound by residues asparagine 226–serine 231, threonine 245–threonine 251, aspartate 270–glycine 273, and asparagine 335–aspartate 338. Serine 230 contacts Mg(2+). Positions 245, 247, and 250 each coordinate K(+). Residue threonine 251 coordinates Mg(2+). Lysine 456 is a binding site for (6S)-5-formyl-5,6,7,8-tetrahydrofolate.

It belongs to the TRAFAC class TrmE-Era-EngA-EngB-Septin-like GTPase superfamily. TrmE GTPase family. As to quaternary structure, homodimer. Heterotetramer of two MnmE and two MnmG subunits. It depends on K(+) as a cofactor.

The protein resides in the cytoplasm. Functionally, exhibits a very high intrinsic GTPase hydrolysis rate. Involved in the addition of a carboxymethylaminomethyl (cmnm) group at the wobble position (U34) of certain tRNAs, forming tRNA-cmnm(5)s(2)U34. The protein is tRNA modification GTPase MnmE of Pseudomonas fluorescens (strain ATCC BAA-477 / NRRL B-23932 / Pf-5).